The primary structure comprises 509 residues: Angiopoietin-4 (509 aa).

An N-terminal signal peptide occupies residues methionine 1–alanine 21. N-linked (GlcNAc...) asparagine glycosylation is found at asparagine 105, asparagine 135, asparagine 149, asparagine 167, asparagine 256, asparagine 306, asparagine 317, and asparagine 417. A coiled-coil region spans residues leucine 181 to glutamate 269. The region spanning lysine 288–glycine 508 is the Fibrinogen C-terminal domain. Cysteine 297 and cysteine 326 form a disulfide bridge. The interval valine 416–phenylalanine 436 is disordered. Cysteine 450 and cysteine 463 are disulfide-bonded.

Homodimer; disulfide-linked. Interacts with TEK/TIE2. In terms of tissue distribution, widely expressed.

It is found in the secreted. Functionally, binds to TEK/TIE2, modulating ANGPT1 signaling. Can induce tyrosine phosphorylation of TEK/TIE2. Promotes endothelial cell survival, migration and angiogenesis. In Mus musculus (Mouse), this protein is Angiopoietin-4 (Angpt4).